Consider the following 711-residue polypeptide: Amyloid beta precursor protein binding family B member 1 (711 aa).

A Phosphoserine modification is found at Ser-135. Disordered stretches follow at residues 140–257 (NTQG…SDLP), 277–300 (GTTQ…EESQ), and 321–364 (EPSE…QRNA). The segment covering 156–174 (EVEEEDEDEEEEDEEEEDL) has biased composition (acidic residues). Lys-205 is subject to N6-acetyllysine. The span at 224–235 (SWATLSQGSPSY) shows a compositional bias: polar residues. A WW domain is found at 254–286 (SDLPAGWMRVQDTSGTYYWHIPTGTTQWEPPGR). Over residues 288–300 (SPSQGNSPQEESQ) the composition is skewed to polar residues. PID domains are found at residues 365–533 (NPGI…QVEF) and 538–700 (NELV…LWGS). Ser-460 is subject to Phosphoserine; by PKC. A Phosphoserine modification is found at Ser-518. Tyr-548 is subject to Phosphotyrosine; by ABL1. Ser-611 carries the phosphoserine; by SGK1 modification. The residue at position 702 (Lys-702) is an N6-acetyllysine.

As to quaternary structure, component of a complex, at least composed of APBB1, RASD1/DEXRAS1 and APP. Interacts (via PID domain 2) with APP (with the intracellular domain of the amyloid-beta precursor protein). Interacts (via PID domain 2) with RASD1/DEXRAS1; impairs the transcription activation activity. Interacts (via PID domain 1) with KAT5/TIP60. Interacts (via the WW domain) with the proline-rich region of APBB1IP. Interacts with TSHZ1 and TSHZ2. Interacts (via the WW domain) with histone H2AX (when phosphorylated on 'Tyr-142') and the proline-rich region of ENAH. Interacts with MAPK8. Interacts (via PID domain 1) with TSHZ3 (via homeobox domain). Interacts with SET. Found in a trimeric complex with HDAC1 and TSHZ3; the interaction between HDAC1 and APBB1 is mediated by TSHZ3. Interacts (via WWW domain) with NEK6. Interacts (via WWW domain) with ABL1. Interacts with RNF157. Interacts with ARF6. Post-translationally, polyubiquitination by RNF157 leads to degradation by the proteasome. Phosphorylation at Ser-611 by SGK1 promotes its localization to the nucleus. Phosphorylated following nuclear translocation. Phosphorylation at Tyr-547 by ABL1 enhances transcriptional activation activity and reduces the affinity for RASD1/DEXRAS1. Phosphorylated at Ser-460 by PKC upon insulin activation. In terms of processing, acetylation at Lys-205 and Lys-702 by KAT5 promotes its transcription activator activity. As to expression, brain, not in liver, very low in other tissues. The long (neuron-specific) form is expressed only in brain.

The protein localises to the cell membrane. The protein resides in the cytoplasm. Its subcellular location is the nucleus. It localises to the cell projection. It is found in the growth cone. The protein localises to the nucleus speckle. Transcription coregulator that can have both coactivator and corepressor functions. Adapter protein that forms a transcriptionally active complex with the gamma-secretase-derived amyloid precursor protein (APP) intracellular domain. Plays a central role in the response to DNA damage by translocating to the nucleus and inducing apoptosis. May act by specifically recognizing and binding histone H2AX phosphorylated on 'Tyr-142' (H2AXY142ph) at double-strand breaks (DSBs), recruiting other pro-apoptosis factors such as MAPK8/JNK1. Required for histone H4 acetylation at double-strand breaks (DSBs). Its ability to specifically bind modified histones and chromatin modifying enzymes such as KAT5/TIP60, probably explains its transcription activation activity. Functions in association with TSHZ3, SET and HDAC factors as a transcriptional repressor, that inhibits the expression of CASP4. Associates with chromatin in a region surrounding the CASP4 transcriptional start site(s). Involved in hippocampal neurite branching and neuromuscular junction formation, as a result plays a role in spatial memory functioning. Plays a role in the maintenance of lens transparency. May play a role in muscle cell strength. Acts as a molecular adapter that functions in neurite outgrowth by activating the RAC1-ARF6 axis upon insulin treatment. This Rattus norvegicus (Rat) protein is Amyloid beta precursor protein binding family B member 1.